The chain runs to 189 residues: Parkinson disease protein 7 homolog (189 aa).

A2 bears the N-acetylalanine mark. Residues C46 and C53 are each lipidated (S-palmitoyl cysteine). Y67 bears the Phosphotyrosine mark. The active-site Nucleophile is the C106. C106 is modified (cysteine sulfinic acid (-SO2H); alternate). C106 carries S-palmitoyl cysteine; alternate lipidation. Residue H126 is part of the active site. Residue K130 forms a Glycyl lysine isopeptide (Lys-Gly) (interchain with G-Cter in SUMO) linkage. At K148 the chain carries N6-acetyllysine. K182 carries the N6-succinyllysine modification.

This sequence belongs to the peptidase C56 family. In terms of assembly, homodimer. Binds EFCAB6/DJBP and PIAS2. Part of a ternary complex containing PARK7, EFCAB6/DJBP and AR. Interacts (via N-terminus) with OTUD7B. Interacts with BBS1, HIPK1, CLCF1 and MTERF. Forms a complex with PINK1 and PRKN. Interacts (via C-terminus) with NCF1; the interaction is enhanced by LPS and modulates NCF1 phosphorylation and membrane translocation. Interacts with NENF. Requires Deglycase activity does not require glutathione as a cofactor, however, glycated glutathione constitutes a PARK7 substrate. as cofactor. Sumoylated on Lys-130 by PIAS2 or PIAS4; which is essential for cell-growth promoting activity and transforming activity. Post-translationally, undergoes cleavage of a C-terminal peptide and subsequent activation of protease activity in response to oxidative stress.

Its subcellular location is the cell membrane. It localises to the cytoplasm. The protein resides in the nucleus. The protein localises to the membrane raft. It is found in the mitochondrion. Its subcellular location is the endoplasmic reticulum. The enzyme catalyses N(omega)-(1-hydroxy-2-oxopropyl)-L-arginyl-[protein] + H2O = lactate + L-arginyl-[protein] + H(+). The catalysed reaction is N(6)-(1-hydroxy-2-oxopropyl)-L-lysyl-[protein] + H2O = lactate + L-lysyl-[protein] + H(+). It carries out the reaction S-(1-hydroxy-2-oxopropyl)-L-cysteinyl-[protein] + H2O = lactate + L-cysteinyl-[protein] + H(+). It catalyses the reaction N(omega)-(1-hydroxy-2-oxoethyl)-L-arginyl-[protein] + H2O = L-arginyl-[protein] + glycolate + H(+). The enzyme catalyses N(6)-(1-hydroxy-2-oxoethyl)-L-lysyl-[protein] + H2O = glycolate + L-lysyl-[protein] + H(+). The catalysed reaction is S-(1-hydroxy-2-oxoethyl)-L-cysteinyl-[protein] + H2O = glycolate + L-cysteinyl-[protein] + H(+). It carries out the reaction N(2)-(1-hydroxy-2-oxopropyl)-dGTP + H2O = lactate + dGTP + H(+). It catalyses the reaction N(2)-(1-hydroxy-2-oxopropyl)-GTP + H2O = lactate + GTP + H(+). The enzyme catalyses N(2)-(1-hydroxy-2-oxopropyl)-GDP + H2O = lactate + GDP + H(+). The catalysed reaction is N(2)-(1-hydroxy-2-oxopropyl)-GMP + H2O = lactate + GMP + H(+). It carries out the reaction N(2)-(1-hydroxy-2-oxoethyl)-dGTP + H2O = dGTP + glycolate + H(+). It catalyses the reaction N(2)-(1-hydroxy-2-oxoethyl)-GTP + H2O = glycolate + GTP + H(+). The enzyme catalyses N(2)-(1-hydroxy-2-oxoethyl)-GDP + H2O = glycolate + GDP + H(+). The catalysed reaction is N(2)-(1-hydroxy-2-oxoethyl)-GMP + H2O = glycolate + GMP + H(+). It carries out the reaction an N(2)-(1-hydroxy-2-oxopropyl)-guanosine in RNA + H2O = a guanosine in RNA + lactate + H(+). It catalyses the reaction an N(2)-(1-hydroxy-2-oxopropyl)-2'-deoxyguanosine in DNA + H2O = a 2'-deoxyguanosine in DNA + lactate + H(+). The enzyme catalyses an N(2)-(1-hydroxy-2-oxoethyl)-guanosine in RNA + H2O = a guanosine in RNA + glycolate + H(+). The catalysed reaction is an N(2)-(1-hydroxy-2-oxoethyl)-2'-deoxyguanosine in DNA + H2O = a 2'-deoxyguanosine in DNA + glycolate + H(+). Functionally, multifunctional protein with controversial molecular function which plays an important role in cell protection against oxidative stress and cell death acting as oxidative stress sensor and redox-sensitive chaperone and protease. It is involved in neuroprotective mechanisms like the stabilization of NFE2L2 and PINK1 proteins, male fertility as a positive regulator of androgen signaling pathway as well as cell growth and transformation through, for instance, the modulation of NF-kappa-B signaling pathway. Has been described as a protein and nucleotide deglycase that catalyzes the deglycation of the Maillard adducts formed between amino groups of proteins or nucleotides and reactive carbonyl groups of glyoxals. But this function is rebuted by other works. As a protein deglycase, repairs methylglyoxal- and glyoxal-glycated proteins, and releases repaired proteins and lactate or glycolate, respectively. Deglycates cysteine, arginine and lysine residues in proteins, and thus reactivates these proteins by reversing glycation by glyoxals. Acts on early glycation intermediates (hemithioacetals and aminocarbinols), preventing the formation of advanced glycation endproducts (AGE) that cause irreversible damage. Also functions as a nucleotide deglycase able to repair glycated guanine in the free nucleotide pool (GTP, GDP, GMP, dGTP) and in DNA and RNA. Is thus involved in a major nucleotide repair system named guanine glycation repair (GG repair), dedicated to reversing methylglyoxal and glyoxal damage via nucleotide sanitization and direct nucleic acid repair. Protects histones from adduction by methylglyoxal, controls the levels of methylglyoxal-derived argininine modifications on chromatin. Able to remove the glycations and restore histone 3, histone glycation disrupts both local and global chromatin architecture by altering histone-DNA interactions as well as histone acetylation and ubiquitination levels. Displays a very low glyoxalase activity that may reflect its deglycase activity. Eliminates hydrogen peroxide and protects cells against hydrogen peroxide-induced cell death. Required for correct mitochondrial morphology and function as well as for autophagy of dysfunctional mitochondria. Plays a role in regulating expression or stability of the mitochondrial uncoupling proteins SLC25A14 and SLC25A27 in dopaminergic neurons of the substantia nigra pars compacta and attenuates the oxidative stress induced by calcium entry into the neurons via L-type channels during pacemaking. Regulates astrocyte inflammatory responses, may modulate lipid rafts-dependent endocytosis in astrocytes and neuronal cells. In pancreatic islets, involved in the maintenance of mitochondrial reactive oxygen species (ROS) levels and glucose homeostasis in an age- and diet dependent manner. Protects pancreatic beta cells from cell death induced by inflammatory and cytotoxic setting. Binds to a number of mRNAs containing multiple copies of GG or CC motifs and partially inhibits their translation but dissociates following oxidative stress. Metal-binding protein able to bind copper as well as toxic mercury ions, enhances the cell protection mechanism against induced metal toxicity. In macrophages, interacts with the NADPH oxidase subunit NCF1 to direct NADPH oxidase-dependent ROS production, and protects against sepsis. This chain is Parkinson disease protein 7 homolog, found in Chlorocebus aethiops (Green monkey).